Here is a 269-residue protein sequence, read N- to C-terminus: MSSMNKRVFDILRELDSLVDFSRAKLQWDILIILATKGPSSTTEISQTINTSRKSIIDAIRKLVDKELVTKVKGDIYGLSEKGEKLLESFDSIMSINVTDKPDSSIESNSISLTNIAEYFYMLEILKMALLNKQITIDKASHELGISKQTLKYYIETFTENKLLKVVNQESVLGKSKKIYVLTDESRKLVSRLPELTRLKRNLPLKILLKLTGSYRYEIALTKVMLFNVISIPVLMYLKDQLGILEAIWLYVIILLPLLSIFAEIFNRI.

Topologically, residues 1–217 (MSSMNKRVFD…LLKLTGSYRY (217 aa)) are cytoplasmic. Residues 42 to 65 (TTEISQTINTSRKSIIDAIRKLVD) constitute a DNA-binding region (H-T-H motif). Residues 218–238 (EIALTKVMLFNVISIPVLMYL) traverse the membrane as a helical segment. At 239 to 241 (KDQ) the chain is on the extracellular side. A helical transmembrane segment spans residues 242 to 262 (LGILEAIWLYVIILLPLLSIF). The Cytoplasmic segment spans residues 263-269 (AEIFNRI).

The protein resides in the cell membrane. Involved in regulation of archaellar gene expression. May activate flaB transcription upon nutrient starvation by acting on the flaB promoter. The sequence is that of HTH-type transcriptional activator ArnR1 from Sulfolobus acidocaldarius (strain ATCC 33909 / DSM 639 / JCM 8929 / NBRC 15157 / NCIMB 11770).